The following is a 315-amino-acid chain: Ribosomal protein L11 methyltransferase (315 aa).

S-adenosyl-L-methionine-binding residues include threonine 164, glycine 185, aspartate 207, and asparagine 250.

The protein belongs to the methyltransferase superfamily. PrmA family.

The protein resides in the cytoplasm. The catalysed reaction is L-lysyl-[protein] + 3 S-adenosyl-L-methionine = N(6),N(6),N(6)-trimethyl-L-lysyl-[protein] + 3 S-adenosyl-L-homocysteine + 3 H(+). Its function is as follows. Methylates ribosomal protein L11. This is Ribosomal protein L11 methyltransferase from Exiguobacterium sibiricum (strain DSM 17290 / CCUG 55495 / CIP 109462 / JCM 13490 / 255-15).